We begin with the raw amino-acid sequence, 273 residues long: Dermonecrotic toxin LapSicTox-alphaIB1b2 (273 aa).

Residue His-5 is part of the active site. The Mg(2+) site is built by Glu-25 and Asp-27. Residue His-41 is the Nucleophile of the active site. Disulfide bonds link Cys-45/Cys-51 and Cys-47/Cys-190. Residue Asp-85 coordinates Mg(2+). Asn-250 is a glycosylation site (N-linked (GlcNAc...) asparagine).

Belongs to the arthropod phospholipase D family. Class II subfamily. Requires Mg(2+) as cofactor. In terms of tissue distribution, expressed by the venom gland.

It localises to the secreted. The enzyme catalyses an N-(acyl)-sphingosylphosphocholine = an N-(acyl)-sphingosyl-1,3-cyclic phosphate + choline. It catalyses the reaction an N-(acyl)-sphingosylphosphoethanolamine = an N-(acyl)-sphingosyl-1,3-cyclic phosphate + ethanolamine. The catalysed reaction is a 1-acyl-sn-glycero-3-phosphocholine = a 1-acyl-sn-glycero-2,3-cyclic phosphate + choline. It carries out the reaction a 1-acyl-sn-glycero-3-phosphoethanolamine = a 1-acyl-sn-glycero-2,3-cyclic phosphate + ethanolamine. Dermonecrotic toxins cleave the phosphodiester linkage between the phosphate and headgroup of certain phospholipids (sphingolipid and lysolipid substrates), forming an alcohol (often choline) and a cyclic phosphate. This toxin acts on sphingomyelin (SM). It may also act on ceramide phosphoethanolamine (CPE), lysophosphatidylcholine (LPC) and lysophosphatidylethanolamine (LPE), but not on lysophosphatidylserine (LPS), and lysophosphatidylglycerol (LPG). It acts by transphosphatidylation, releasing exclusively cyclic phosphate products as second products. Induces dermonecrosis, hemolysis, increased vascular permeability, edema, inflammatory response, and platelet aggregation. The polypeptide is Dermonecrotic toxin LapSicTox-alphaIB1b2 (Loxosceles apachea (Apache recluse spider)).